A 448-amino-acid polypeptide reads, in one-letter code: 5-hydroxytryptamine receptor 7 (448 aa).

Residues 1–86 are Extracellular-facing; sequence MMDVNSSGRP…INYGRVEKVV (86 aa). N-linked (GlcNAc...) asparagine glycans are attached at residues Asn5 and Asn69. The helical transmembrane segment at 87–111 threads the bilayer; it reads IGSILTLITLLTIAGNCLVVISVCF. Residues 112-121 are Cytoplasmic-facing; the sequence is VKKLRQPSNY. A helical membrane pass occupies residues 122-143; the sequence is LIVSLALADLSVAVAVMPFVSV. Residues 144–155 are Extracellular-facing; the sequence is TDLIGGKWIFGH. Residues 156 to 181 form a helical membrane-spanning segment; it reads FFCNVFIAMDVMCCTASIMTLCVISI. The cysteines at positions 158 and 234 are disulfide-linked. Residue Asp165 participates in serotonin binding. Residues 182 to 201 are Cytoplasmic-facing; the sequence is DRYLGITRPLTYPVRQNGKC. Residues 202-222 traverse the membrane as a helical segment; it reads MAKMILSVWLLSASITLPPLF. The Extracellular segment spans residues 223–240; that stretch reads GWAQNVNDDKVCLISQDF. Residues 241 to 263 traverse the membrane as a helical segment; it reads GYTIYSTAVAFYIPMSVMLFMYY. Over 264–329 the chain is Cytoplasmic; that stretch reads QIYKAARKSA…SIFKREQKAA (66 aa). A helical transmembrane segment spans residues 330–355; the sequence is TTLGIIVGAFTVCWLPFFLLSTARPF. Residues 356–366 are Extracellular-facing; that stretch reads ICGTSCSCIPL. The helical transmembrane segment at 367-390 threads the bilayer; the sequence is WVERTCLWLGYANSLINPFIYAFF. Residues 391–448 lie on the Cytoplasmic side of the membrane; it reads NRDLRTTYRSLLQCQYRNINRKLSAAGMHEALKLAERPERSEFVLQNCDHCGKKGHDT. Cys404 carries S-palmitoyl cysteine lipidation.

It belongs to the G-protein coupled receptor 1 family.

The protein localises to the cell membrane. Functionally, G-protein coupled receptor for 5-hydroxytryptamine (serotonin), a biogenic hormone that functions as a neurotransmitter, a hormone and a mitogen. Ligand binding causes a conformation change that triggers signaling via guanine nucleotide-binding proteins (G proteins) and modulates the activity of downstream effectors. HTR7 is coupled to G(s) G alpha proteins and mediates activation of adenylate cyclase activity. The protein is 5-hydroxytryptamine receptor 7 (Htr7) of Mus musculus (Mouse).